A 520-amino-acid chain; its full sequence is Cytochrome P450 1A1 (520 aa).

Substrate is bound at residue phenylalanine 230. Heme is bound at residue cysteine 464.

The protein belongs to the cytochrome P450 family. It depends on heme as a cofactor.

The protein localises to the endoplasmic reticulum membrane. It is found in the microsome membrane. It catalyses the reaction an organic molecule + reduced [NADPH--hemoprotein reductase] + O2 = an alcohol + oxidized [NADPH--hemoprotein reductase] + H2O + H(+). Its function is as follows. Cytochromes P450 are a group of heme-thiolate monooxygenases. In liver microsomes, this enzyme is involved in an NADPH-dependent electron transport pathway. It oxidizes a variety of structurally unrelated compounds, including steroids, fatty acids, and xenobiotics. This chain is Cytochrome P450 1A1 (cyp1a1), found in Dicentrarchus labrax (European seabass).